Consider the following 323-residue polypeptide: 4-hydroxy-3-methylbut-2-enyl diphosphate reductase (323 aa).

Cysteine 12 is a binding site for [4Fe-4S] cluster. Residues histidine 43 and histidine 81 each coordinate (2E)-4-hydroxy-3-methylbut-2-enyl diphosphate. Residues histidine 43 and histidine 81 each coordinate dimethylallyl diphosphate. Isopentenyl diphosphate is bound by residues histidine 43 and histidine 81. Cysteine 103 contributes to the [4Fe-4S] cluster binding site. Histidine 131 lines the (2E)-4-hydroxy-3-methylbut-2-enyl diphosphate pocket. Histidine 131 contributes to the dimethylallyl diphosphate binding site. Histidine 131 is a binding site for isopentenyl diphosphate. Glutamate 133 functions as the Proton donor in the catalytic mechanism. Threonine 170 contributes to the (2E)-4-hydroxy-3-methylbut-2-enyl diphosphate binding site. Cysteine 198 is a binding site for [4Fe-4S] cluster. (2E)-4-hydroxy-3-methylbut-2-enyl diphosphate is bound by residues serine 226, asparagine 228, and serine 271. Dimethylallyl diphosphate is bound by residues serine 226, asparagine 228, and serine 271. Isopentenyl diphosphate-binding residues include serine 226, asparagine 228, and serine 271.

It belongs to the IspH family. [4Fe-4S] cluster serves as cofactor.

The catalysed reaction is isopentenyl diphosphate + 2 oxidized [2Fe-2S]-[ferredoxin] + H2O = (2E)-4-hydroxy-3-methylbut-2-enyl diphosphate + 2 reduced [2Fe-2S]-[ferredoxin] + 2 H(+). The enzyme catalyses dimethylallyl diphosphate + 2 oxidized [2Fe-2S]-[ferredoxin] + H2O = (2E)-4-hydroxy-3-methylbut-2-enyl diphosphate + 2 reduced [2Fe-2S]-[ferredoxin] + 2 H(+). Its pathway is isoprenoid biosynthesis; dimethylallyl diphosphate biosynthesis; dimethylallyl diphosphate from (2E)-4-hydroxy-3-methylbutenyl diphosphate: step 1/1. The protein operates within isoprenoid biosynthesis; isopentenyl diphosphate biosynthesis via DXP pathway; isopentenyl diphosphate from 1-deoxy-D-xylulose 5-phosphate: step 6/6. Functionally, catalyzes the conversion of 1-hydroxy-2-methyl-2-(E)-butenyl 4-diphosphate (HMBPP) into a mixture of isopentenyl diphosphate (IPP) and dimethylallyl diphosphate (DMAPP). Acts in the terminal step of the DOXP/MEP pathway for isoprenoid precursor biosynthesis. The chain is 4-hydroxy-3-methylbut-2-enyl diphosphate reductase from Lysinibacillus sphaericus (strain C3-41).